A 261-amino-acid chain; its full sequence is Chanoclavine-I dehydrogenase easD (261 aa).

An N-terminal signal peptide occupies residues 1–20 (MPSMTSKVFAITGGASGIGA). I18 lines the NADP(+) pocket. N43 carries N-linked (GlcNAc...) asparagine glycosylation. 5 residues coordinate NADP(+): D66, R132, Y166, K170, and T201. Y166 serves as the catalytic Proton donor. The active-site Lowers pKa of active site Tyr is the K170.

The protein belongs to the short-chain dehydrogenases/reductases (SDR) family. In terms of assembly, homotetramer.

The enzyme catalyses chanoclavine-I + NAD(+) = chanoclavine-I aldehyde + NADH + H(+). It functions in the pathway alkaloid biosynthesis; ergot alkaloid biosynthesis. In terms of biological role, chanoclavine-I dehydrogenase; part of the gene cluster that mediates the biosynthesis of fungal ergot alkaloid. DmaW catalyzes the first step of ergot alkaloid biosynthesis by condensing dimethylallyl diphosphate (DMAP) and tryptophan to form 4-dimethylallyl-L-tryptophan. The second step is catalyzed by the methyltransferase easF that methylates 4-dimethylallyl-L-tryptophan in the presence of S-adenosyl-L-methionine, resulting in the formation of 4-dimethylallyl-L-abrine. The catalase easC and the FAD-dependent oxidoreductase easE then transform 4-dimethylallyl-L-abrine to chanoclavine-I which is further oxidized by easD in the presence of NAD(+), resulting in the formation of chanoclavine-I aldehyde. Agroclavine dehydrogenase easG then mediates the conversion of chanoclavine-I aldehyde to agroclavine via a non-enzymatic adduct reaction: the substrate is an iminium intermediate that is formed spontaneously from chanoclavine-I aldehyde in the presence of glutathione. The presence of easA is not required to complete this reaction. Further conversion of agroclavine to paspalic acid is a two-step process involving oxidation of agroclavine to elymoclavine and of elymoclavine to paspalic acid, the second step being performed by the elymoclavine oxidase cloA. Paspalic acid is then further converted to D-lysergic acid. Ergopeptines are assembled from D-lysergic acid and three different amino acids by the D-lysergyl-peptide-synthetases composed each of a monomudular and a trimodular nonribosomal peptide synthetase subunit. LpsB and lpsC encode the monomodular subunits responsible for D-lysergic acid activation and incorporation into the ergopeptine backbone. LpsA1 and A2 subunits encode the trimodular nonribosomal peptide synthetase assembling the tripeptide portion of ergopeptines. LpsA1 is responsible for formation of the major ergopeptine, ergotamine, and lpsA2 for alpha-ergocryptine, the minor ergopeptine of the total alkaloid mixture elaborated by C.purpurea. D-lysergyl-tripeptides are assembled by the nonribosomal peptide synthetases and released as N-(D-lysergyl-aminoacyl)-lactams. Cyclolization of the D-lysergyl-tripeptides is performed by the Fe(2+)/2-ketoglutarate-dependent dioxygenase easH which introduces a hydroxyl group into N-(D-lysergyl-aminoacyl)-lactam at alpha-C of the aminoacyl residue followed by spontaneous condensation with the terminal lactam carbonyl group. In Claviceps purpurea (Ergot fungus), this protein is Chanoclavine-I dehydrogenase easD.